Here is a 243-residue protein sequence, read N- to C-terminus: Juxtaposed with another zinc finger protein 1 (243 aa).

A C2H2-type 1 zinc finger spans residues 12–37 (NTCRFGGCGLHFPTLADLIEHIEDNH). Residues 39–79 (DTDPRVLEKQELQQPTYVALSYINRFMTDAARREQESLKKK) are required for interaction with NR2C2. Residues 89–108 (SSSVSRGNVSTPPRHSSGSL) show a composition bias toward polar residues. Positions 89-151 (SSSVSRGNVS…SDSDESWTTE (63 aa)) are disordered. 2 positions are modified to phosphothreonine: T109 and T113. Over residues 118-130 (PSSSFRSSTPTGS) the composition is skewed to low complexity. Over residues 131–148 (EYDEEEVDYEESDSDESW) the composition is skewed to acidic residues. A C2H2-type 2 zinc finger spans residues 173–198 (FACPVPGCKKRYKNVNGIKYHAKNGH). The C2H2-type 3; degenerate zinc-finger motif lies at 208–230 (FKCRCGKSYKTAQGLRHHTINFH).

As to quaternary structure, interacts with NR2C2 (via ligand-binding region). As to expression, expressed in range of tissues with highest expression levels in testis, liver, muscle and fat and lowest levels in kidney. Detected in liver and white adipose tissue (at protein level).

It localises to the nucleus. Functionally, acts as a transcriptional corepressor of orphan nuclear receptor NR2C2. Inhibits expression of the gluconeogenesis enzyme PCK2 through inhibition of NR2C2 activity. Also involved in transcriptional activation of NAMPT by promoting expression of PPARA and PPARD. Plays a role in lipid metabolism by suppressing lipogenesis, increasing lipolysis and decreasing lipid accumulation in adipose tissue. Plays a role in glucose homeostasis by improving glucose metabolism and insulin sensitivity. This is Juxtaposed with another zinc finger protein 1 (Jazf1) from Mus musculus (Mouse).